Consider the following 713-residue polypeptide: Probable arginine--tRNA ligase, cytoplasmic (713 aa).

A disordered region spans residues 74-113 (KNKKNGVKATSTSSPSSSTSAPAEKKAKKDGKTGGAPPKQ). The span at 81–95 (KATSTSSPSSSTSAP) shows a compositional bias: low complexity. A compositionally biased stretch (basic and acidic residues) spans 96–105 (AEKKAKKDGK). L-arginine contacts are provided by residues 252-254 (SPN), histidine 263, tyrosine 438, aspartate 442, and glutamine 466. Positions 252–263 (SPNIAKEMHVGH) match the 'HIGH' region motif. Residues 583–597 (NTAVYLLYAYTRIQS) form an interaction with tRNA region.

The protein belongs to the class-I aminoacyl-tRNA synthetase family.

It is found in the cytoplasm. It localises to the cytosol. The catalysed reaction is tRNA(Arg) + L-arginine + ATP = L-arginyl-tRNA(Arg) + AMP + diphosphate. In terms of biological role, forms part of a macromolecular complex that catalyzes the attachment of specific amino acids to cognate tRNAs during protein synthesis. This Caenorhabditis elegans protein is Probable arginine--tRNA ligase, cytoplasmic.